Here is a 204-residue protein sequence, read N- to C-terminus: LexA repressor (204 aa).

A DNA-binding region (H-T-H motif) is located at residues 29–49 (VREICKGVGLSSTSSVHGHLS). Active-site for autocatalytic cleavage activity residues include serine 126 and lysine 163.

This sequence belongs to the peptidase S24 family. As to quaternary structure, homodimer.

It carries out the reaction Hydrolysis of Ala-|-Gly bond in repressor LexA.. Represses a number of genes involved in the response to DNA damage (SOS response), including recA and lexA. In the presence of single-stranded DNA, RecA interacts with LexA causing an autocatalytic cleavage which disrupts the DNA-binding part of LexA, leading to derepression of the SOS regulon and eventually DNA repair. The sequence is that of LexA repressor from Clostridium novyi (strain NT).